A 363-amino-acid polypeptide reads, in one-letter code: Aminomethyltransferase (363 aa).

Belongs to the GcvT family. The glycine cleavage system is composed of four proteins: P, T, L and H.

The catalysed reaction is N(6)-[(R)-S(8)-aminomethyldihydrolipoyl]-L-lysyl-[protein] + (6S)-5,6,7,8-tetrahydrofolate = N(6)-[(R)-dihydrolipoyl]-L-lysyl-[protein] + (6R)-5,10-methylene-5,6,7,8-tetrahydrofolate + NH4(+). Functionally, the glycine cleavage system catalyzes the degradation of glycine. The chain is Aminomethyltransferase from Nitrosomonas eutropha (strain DSM 101675 / C91 / Nm57).